A 238-amino-acid chain; its full sequence is 1-(5-phosphoribosyl)-5-[(5-phosphoribosylamino)methylideneamino] imidazole-4-carboxamide isomerase (238 aa).

The active-site Proton acceptor is Asp8. The active-site Proton donor is Asp127.

It belongs to the HisA/HisF family.

The protein localises to the cytoplasm. It carries out the reaction 1-(5-phospho-beta-D-ribosyl)-5-[(5-phospho-beta-D-ribosylamino)methylideneamino]imidazole-4-carboxamide = 5-[(5-phospho-1-deoxy-D-ribulos-1-ylimino)methylamino]-1-(5-phospho-beta-D-ribosyl)imidazole-4-carboxamide. It functions in the pathway amino-acid biosynthesis; L-histidine biosynthesis; L-histidine from 5-phospho-alpha-D-ribose 1-diphosphate: step 4/9. In Nitratiruptor sp. (strain SB155-2), this protein is 1-(5-phosphoribosyl)-5-[(5-phosphoribosylamino)methylideneamino] imidazole-4-carboxamide isomerase.